The sequence spans 295 residues: Cyclin-G1 (295 aa).

Belongs to the cyclin family. Cyclin G subfamily.

The protein localises to the nucleus. In terms of biological role, may play a role in growth regulation. Is associated with G2/M phase arrest in response to DNA damage. May be an intermediate by which p53 mediates its role as an inhibitor of cellular proliferation. This chain is Cyclin-G1 (CCNG1), found in Bos taurus (Bovine).